Consider the following 440-residue polypeptide: Chromosome partition protein MukF (440 aa).

Residues 208-236 (LSETSGTLRELQDTLEAAGDKLQANLLRI) form a leucine-zipper region.

Belongs to the MukF family. Interacts, and probably forms a ternary complex, with MukE and MukB via its C-terminal region. The complex formation is stimulated by calcium or magnesium. It is required for an interaction between MukE and MukB.

The protein localises to the cytoplasm. It is found in the nucleoid. Involved in chromosome condensation, segregation and cell cycle progression. May participate in facilitating chromosome segregation by condensation DNA from both sides of a centrally located replisome during cell division. Not required for mini-F plasmid partitioning. Probably acts via its interaction with MukB and MukE. Overexpression results in anucleate cells. It has a calcium binding activity. This Salmonella gallinarum (strain 287/91 / NCTC 13346) protein is Chromosome partition protein MukF.